A 132-amino-acid polypeptide reads, in one-letter code: Venom CUB domain-containing protein 2 (132 aa).

A signal peptide spans 1–17; the sequence is MKTLFLAIALFSAVALA. In terms of domain architecture, CUB spans 22 to 129; sequence ESAELVPGGE…RGFVACKATA (108 aa). 2 disulfides stabilise this stretch: C66–C125 and C77–C94.

This sequence belongs to the venom CUB family. Expressed by the venom gland (posterior main gland) (at protein level).

The protein resides in the secreted. This is Venom CUB domain-containing protein 2 from Platymeris rhadamanthus (Red spot assassin bug).